A 320-amino-acid chain; its full sequence is Lipoyl synthase (320 aa).

Cysteine 67, cysteine 72, cysteine 78, cysteine 93, cysteine 97, cysteine 100, and serine 307 together coordinate [4Fe-4S] cluster. In terms of domain architecture, Radical SAM core spans 79 to 296 (FNHGTATFMI…RDKANEMGFE (218 aa)).

It belongs to the radical SAM superfamily. Lipoyl synthase family. Requires [4Fe-4S] cluster as cofactor.

It localises to the cytoplasm. It catalyses the reaction [[Fe-S] cluster scaffold protein carrying a second [4Fe-4S](2+) cluster] + N(6)-octanoyl-L-lysyl-[protein] + 2 oxidized [2Fe-2S]-[ferredoxin] + 2 S-adenosyl-L-methionine + 4 H(+) = [[Fe-S] cluster scaffold protein] + N(6)-[(R)-dihydrolipoyl]-L-lysyl-[protein] + 4 Fe(3+) + 2 hydrogen sulfide + 2 5'-deoxyadenosine + 2 L-methionine + 2 reduced [2Fe-2S]-[ferredoxin]. Its pathway is protein modification; protein lipoylation via endogenous pathway; protein N(6)-(lipoyl)lysine from octanoyl-[acyl-carrier-protein]: step 2/2. In terms of biological role, catalyzes the radical-mediated insertion of two sulfur atoms into the C-6 and C-8 positions of the octanoyl moiety bound to the lipoyl domains of lipoate-dependent enzymes, thereby converting the octanoylated domains into lipoylated derivatives. The polypeptide is Lipoyl synthase (Haemophilus influenzae (strain 86-028NP)).